A 318-amino-acid chain; its full sequence is Serine protease 41 (318 aa).

Residues 1–19 (MGARGALLLALLLARAGLG) form the signal peptide. The propeptide occupies 20 to 54 (KPGELGALQAGPGAARRPGGGGREEACGHREIHAL). Residues 55–297 (VAGGVESARG…YFHWIRRVMS (243 aa)) form the Peptidase S1 domain. C80 and C96 are disulfide-bonded. Residues H95 and D147 each act as charge relay system in the active site. Cystine bridges form between C181–C255, C215–C234, and C245–C273. N211 is a glycosylation site (N-linked (GlcNAc...) asparagine). Residue S249 is the Charge relay system of the active site. A glycan (N-linked (GlcNAc...) asparagine) is linked at N284. S299 carries the GPI-anchor amidated serine lipid modification. Positions 300–318 (TPRPNPSQLLLLLALLWAP) are cleaved as a propeptide — removed in mature form.

It belongs to the peptidase S1 family. In terms of processing, N-glycosylated.

Its subcellular location is the cell membrane. This is Serine protease 41 from Homo sapiens (Human).